Here is a 410-residue protein sequence, read N- to C-terminus: Multifunctional CCA protein (410 aa).

2 residues coordinate ATP: Gly8 and Arg11. Positions 8 and 11 each coordinate CTP. Glu21 and Asp23 together coordinate Mg(2+). Positions 91, 137, and 140 each coordinate ATP. Arg91, Arg137, and Arg140 together coordinate CTP. One can recognise an HD domain in the interval Thr228–Phe329.

It belongs to the tRNA nucleotidyltransferase/poly(A) polymerase family. Bacterial CCA-adding enzyme type 1 subfamily. As to quaternary structure, monomer. Can also form homodimers and oligomers. Mg(2+) is required as a cofactor. Requires Ni(2+) as cofactor.

It catalyses the reaction a tRNA precursor + 2 CTP + ATP = a tRNA with a 3' CCA end + 3 diphosphate. It carries out the reaction a tRNA with a 3' CCA end + 2 CTP + ATP = a tRNA with a 3' CCACCA end + 3 diphosphate. Functionally, catalyzes the addition and repair of the essential 3'-terminal CCA sequence in tRNAs without using a nucleic acid template. Adds these three nucleotides in the order of C, C, and A to the tRNA nucleotide-73, using CTP and ATP as substrates and producing inorganic pyrophosphate. tRNA 3'-terminal CCA addition is required both for tRNA processing and repair. Also involved in tRNA surveillance by mediating tandem CCA addition to generate a CCACCA at the 3' terminus of unstable tRNAs. While stable tRNAs receive only 3'-terminal CCA, unstable tRNAs are marked with CCACCA and rapidly degraded. The polypeptide is Multifunctional CCA protein (Legionella pneumophila subsp. pneumophila (strain Philadelphia 1 / ATCC 33152 / DSM 7513)).